Here is a 201-residue protein sequence, read N- to C-terminus: MEKFITIKSTVVPLPIEDVDTDQIIPARFLKATTKEGFGKSLFCDWRYNQDGTPKADFVMNNPLYSGQILVAGKNFGCGSSREHAAWAIGDAGFRVVVSSFFADIFRGNALNNGILPVQVSDAFLKSIFDAVAANAKQELVVDLANQVISIAGTDLKESFVINEYKKTCLINGYDDIDYVLSIKDKIEAYEKTSKYLSLLA.

Belongs to the LeuD family. LeuD type 1 subfamily. Heterodimer of LeuC and LeuD.

The catalysed reaction is (2R,3S)-3-isopropylmalate = (2S)-2-isopropylmalate. The protein operates within amino-acid biosynthesis; L-leucine biosynthesis; L-leucine from 3-methyl-2-oxobutanoate: step 2/4. Functionally, catalyzes the isomerization between 2-isopropylmalate and 3-isopropylmalate, via the formation of 2-isopropylmaleate. This Cytophaga hutchinsonii (strain ATCC 33406 / DSM 1761 / CIP 103989 / NBRC 15051 / NCIMB 9469 / D465) protein is 3-isopropylmalate dehydratase small subunit.